The sequence spans 202 residues: Na(+)-translocating NADH-quinone reductase subunit E (202 aa).

6 helical membrane-spanning segments follow: residues 11 to 31, 35 to 55, 81 to 101, 114 to 134, 144 to 164, and 180 to 200; these read AVFVENMALAFFLGMCTFIAI, VETAIGLGIAVIVVQTITVPA, FLGLLSYIGVIAAIVQILEML, GVFLPLITVNCAIMAGSLFMV, TVYGVGSGFSWALAIAALAGI, and LGITFITIGLMSLGFMSFSGV.

Belongs to the NqrDE/RnfAE family. As to quaternary structure, composed of six subunits; NqrA, NqrB, NqrC, NqrD, NqrE and NqrF.

Its subcellular location is the cell inner membrane. It catalyses the reaction a ubiquinone + n Na(+)(in) + NADH + H(+) = a ubiquinol + n Na(+)(out) + NAD(+). In terms of biological role, NQR complex catalyzes the reduction of ubiquinone-1 to ubiquinol by two successive reactions, coupled with the transport of Na(+) ions from the cytoplasm to the periplasm. NqrA to NqrE are probably involved in the second step, the conversion of ubisemiquinone to ubiquinol. The protein is Na(+)-translocating NADH-quinone reductase subunit E of Pseudomonas aeruginosa (strain LESB58).